The following is a 225-amino-acid chain: 2-C-methyl-D-erythritol 4-phosphate cytidylyltransferase (225 aa).

Belongs to the IspD/TarI cytidylyltransferase family. IspD subfamily.

It carries out the reaction 2-C-methyl-D-erythritol 4-phosphate + CTP + H(+) = 4-CDP-2-C-methyl-D-erythritol + diphosphate. It participates in isoprenoid biosynthesis; isopentenyl diphosphate biosynthesis via DXP pathway; isopentenyl diphosphate from 1-deoxy-D-xylulose 5-phosphate: step 2/6. Catalyzes the formation of 4-diphosphocytidyl-2-C-methyl-D-erythritol from CTP and 2-C-methyl-D-erythritol 4-phosphate (MEP). This chain is 2-C-methyl-D-erythritol 4-phosphate cytidylyltransferase, found in Haemophilus influenzae (strain PittEE).